A 197-amino-acid polypeptide reads, in one-letter code: Thymidine kinase (197 aa).

Residues 9-16 (AAMNAGKS) and 83-86 (DESQ) contribute to the ATP site. E84 acts as the Proton acceptor in catalysis. 4 residues coordinate Zn(2+): C141, C143, C178, and C181.

Belongs to the thymidine kinase family. As to quaternary structure, homotetramer.

Its subcellular location is the cytoplasm. The enzyme catalyses thymidine + ATP = dTMP + ADP + H(+). The sequence is that of Thymidine kinase from Albidiferax ferrireducens (strain ATCC BAA-621 / DSM 15236 / T118) (Rhodoferax ferrireducens).